The following is a 216-amino-acid chain: Gas vesicle protein H (216 aa).

Residues 1 to 141 (MSPNLNGPGG…IHIETRETDD (141 aa)) are disordered. A compositionally biased stretch (acidic residues) spans 15–25 (DRPDEPDDSDR). Composition is skewed to basic and acidic residues over residues 38 to 51 (PDDR…RPSD), 73 to 84 (DGHRQGHGRIDR), and 107 to 141 (KPSD…ETDD).

Belongs to the gas vesicle GvpH family. In terms of assembly, gvpF to GvpM interact with each other in vitro, and may form multi-subunit complex(es). Interacts with GvpC. Might interact with GvpA.

The protein localises to the gas vesicle. Functionally, proteins GvpF to GvpM might be involved in nucleating gas vesicle formation. A minor component of the gas vesicle. Gas vesicles are hollow, gas filled proteinaceous nanostructures found in some microorganisms. They allow positioning of halobacteria at the optimal depth for growth in the poorly aerated, shallow brine pools of their habitat. Its function is as follows. Expression of a 9.5 kb mc-vac DNA fragment containing 2 divergently transcribed regions (gvpD-gvpE-gvpF-gvpG-gvpH-gvpI-gvpJ-gvpK-gvpL-gvpM and gvpA-gvpC-gvpN-gvpO) allows H.volcanii to produce gas vesicles. This chain is Gas vesicle protein H, found in Haloferax mediterranei (strain ATCC 33500 / DSM 1411 / JCM 8866 / NBRC 14739 / NCIMB 2177 / R-4) (Halobacterium mediterranei).